We begin with the raw amino-acid sequence, 105 residues long: uncharacterized protein (105 aa).

This is an uncharacterized protein from Schizosaccharomyces pombe (strain 972 / ATCC 24843) (Fission yeast).